Reading from the N-terminus, the 335-residue chain is RVS161-like protein RVS162 (335 aa).

A BAR domain is found at Val17 to Ile310. The stretch at Lys30–Tyr56 forms a coiled coil. Positions His105 to Thr127 are disordered. Positions Glu107 to Asp118 are enriched in acidic residues. Residues Thr222–Ile259 adopt a coiled-coil conformation.

Its subcellular location is the cytoplasm. It localises to the cytoskeleton. Component of a cytoskeletal structure that is required for membrane curvature. This Candida albicans (strain SC5314 / ATCC MYA-2876) (Yeast) protein is RVS161-like protein RVS162.